We begin with the raw amino-acid sequence, 457 residues long: Siroheme synthase (457 aa).

Residues 1-204 form a precorrin-2 dehydrogenase /sirohydrochlorin ferrochelatase region; the sequence is MDHLPIFCQL…ADAKAVSEIT (204 aa). NAD(+)-binding positions include 22-23 and 43-44; these read DV and LA. Position 128 is a phosphoserine (serine 128). The interval 216 to 457 is uroporphyrinogen-III C-methyltransferase; the sequence is GEVVLVGAGP…RDKLNWFSNH (242 aa). Proline 225 provides a ligand contact to S-adenosyl-L-methionine. Aspartate 248 (proton acceptor) is an active-site residue. Residue lysine 270 is the Proton donor of the active site. S-adenosyl-L-methionine-binding positions include 301–303, isoleucine 306, 331–332, methionine 382, and glycine 411; these read GGD and TA.

In the N-terminal section; belongs to the precorrin-2 dehydrogenase / sirohydrochlorin ferrochelatase family. This sequence in the C-terminal section; belongs to the precorrin methyltransferase family.

The catalysed reaction is uroporphyrinogen III + 2 S-adenosyl-L-methionine = precorrin-2 + 2 S-adenosyl-L-homocysteine + H(+). It carries out the reaction precorrin-2 + NAD(+) = sirohydrochlorin + NADH + 2 H(+). It catalyses the reaction siroheme + 2 H(+) = sirohydrochlorin + Fe(2+). The protein operates within cofactor biosynthesis; adenosylcobalamin biosynthesis; precorrin-2 from uroporphyrinogen III: step 1/1. It functions in the pathway cofactor biosynthesis; adenosylcobalamin biosynthesis; sirohydrochlorin from precorrin-2: step 1/1. It participates in porphyrin-containing compound metabolism; siroheme biosynthesis; precorrin-2 from uroporphyrinogen III: step 1/1. Its pathway is porphyrin-containing compound metabolism; siroheme biosynthesis; siroheme from sirohydrochlorin: step 1/1. The protein operates within porphyrin-containing compound metabolism; siroheme biosynthesis; sirohydrochlorin from precorrin-2: step 1/1. In terms of biological role, multifunctional enzyme that catalyzes the SAM-dependent methylations of uroporphyrinogen III at position C-2 and C-7 to form precorrin-2 via precorrin-1. Then it catalyzes the NAD-dependent ring dehydrogenation of precorrin-2 to yield sirohydrochlorin. Finally, it catalyzes the ferrochelation of sirohydrochlorin to yield siroheme. This chain is Siroheme synthase, found in Citrobacter koseri (strain ATCC BAA-895 / CDC 4225-83 / SGSC4696).